We begin with the raw amino-acid sequence, 465 residues long: UDP-N-acetylmuramoylalanine--D-glutamate ligase (465 aa).

127-133 contacts ATP; sequence GSNGKST.

The protein belongs to the MurCDEF family.

It localises to the cytoplasm. It catalyses the reaction UDP-N-acetyl-alpha-D-muramoyl-L-alanine + D-glutamate + ATP = UDP-N-acetyl-alpha-D-muramoyl-L-alanyl-D-glutamate + ADP + phosphate + H(+). It functions in the pathway cell wall biogenesis; peptidoglycan biosynthesis. Cell wall formation. Catalyzes the addition of glutamate to the nucleotide precursor UDP-N-acetylmuramoyl-L-alanine (UMA). The sequence is that of UDP-N-acetylmuramoylalanine--D-glutamate ligase from Cereibacter sphaeroides (strain KD131 / KCTC 12085) (Rhodobacter sphaeroides).